Here is a 205-residue protein sequence, read N- to C-terminus: High frequency lysogenization protein HflD homolog (205 aa).

Belongs to the HflD family.

It localises to the cytoplasm. It is found in the cell inner membrane. This Shewanella oneidensis (strain ATCC 700550 / JCM 31522 / CIP 106686 / LMG 19005 / NCIMB 14063 / MR-1) protein is High frequency lysogenization protein HflD homolog.